A 744-amino-acid polypeptide reads, in one-letter code: MSLITRVLQGNLTRKNALQTLTRCGYSSHAKFAEHRPIEKIRNIGISAHIDSGKTTLTERILFYTGRIAEMHEVRGKDNVGATMDSMELERQRGITIQSAATYTMWKDTNVNIIDTPGHVDFTVEVERALRVLDGAVLVLCAVGGVQSQTLTVNRQMKRYNVPCLAFINKLDRLGSNPYRVLSQMRSKMNHNAAFIQLPIGVESNCKGLVDLVREQAIYFEGENGMDVRLDEIPQDMRVESQERRQELIEHLSNADETFGEFFLEEKPFSEADLRAALRRTCINRTFTPVLVGTALKNKGVQPLLDAVIDYLPNPGEVENLGFIEREGKDPEKIVLNPARDGKDPFVGLAFKLEAGRFGQLTYLRCYQGVLRKGDNIFNARTNKKVRIARLVRLHSSQMEDVNEVYAGDIFALFGVDCASGDTFTTNPKNNLAMESIFVPEPVVSMAIKPNNTKDRDNFSKAIARFTKEDPTFHFFFDNDVKETLVSGMGELHLEIYAQRMEREYGCPVTLGKPKVAFRETLVGPCEFDYLHKKQSGGSGQYARIIGVMEPLPPNQNTLLEFVDETVGTNVPKQFVPGVEKGYREMAERGMLSGHRLSGIKFRLQDGGHHIVDSSELAFMLAAHGAIKEVFQNGSWQILEPIMMVEVTAPEEFQGAVMGHLSKRHGIITGTEGTEGWFTVYAEVPLNDMFGYAGELRSSTQGKGEFTMEYSRYSPCLPDVQDQIVRQYQETQGASQPDKKKKKN.

The 278-residue stretch at 39–316 folds into the tr-type G domain; it reads EKIRNIGISA…AVIDYLPNPG (278 aa). Residues 48-55, 115-119, and 169-172 each bind GTP; these read AHIDSGKT, DTPGH, and NKLD. Residues 725–735 show a composition bias toward polar residues; the sequence is VRQYQETQGAS. The segment at 725–744 is disordered; the sequence is VRQYQETQGASQPDKKKKKN.

Belongs to the TRAFAC class translation factor GTPase superfamily. Classic translation factor GTPase family. EF-G/EF-2 subfamily.

It localises to the mitochondrion. The protein operates within protein biosynthesis; polypeptide chain elongation. Functionally, mitochondrial GTPase that catalyzes the GTP-dependent ribosomal translocation step during translation elongation. During this step, the ribosome changes from the pre-translocational (PRE) to the post-translocational (POST) state as the newly formed A-site-bound peptidyl-tRNA and P-site-bound deacylated tRNA move to the P and E sites, respectively. Catalyzes the coordinated movement of the two tRNA molecules, the mRNA and conformational changes in the ribosome. Essential during development as it acts as a retrograde signal from mitochondria to the nucleus to slow down cell proliferation if mitochondrial energy output is low. The sequence is that of Elongation factor G, mitochondrial from Drosophila pseudoobscura pseudoobscura (Fruit fly).